A 386-amino-acid polypeptide reads, in one-letter code: TGF-beta-activated kinase 1 and MAP3K7-binding protein 1 (386 aa).

The PPM-type phosphatase domain maps to 22–327 (HSCRYSKQKN…EEMTVIYVKL (306 aa)).

In terms of assembly, interacts with mom-4; the interaction enhances mom-4 kinase activity.

Functionally, involved in the Wnt signaling pathway by regulating mom-4 kinase activity. The polypeptide is TGF-beta-activated kinase 1 and MAP3K7-binding protein 1 (Caenorhabditis elegans).